The following is a 135-amino-acid chain: MKLTARRQARELALQVLFQTEFAPQISYQTFLEVFEQSLDPEVITYADLIVTGVKSNKEAIDSKIQASSAHWKVERMATIDRNILRIAVYEMRFAADPIKENIAINEAVEIAKKYGTSDSGSFVNGLLDQVGKAH.

It belongs to the NusB family.

Its function is as follows. Involved in transcription antitermination. Required for transcription of ribosomal RNA (rRNA) genes. Binds specifically to the boxA antiterminator sequence of the ribosomal RNA (rrn) operons. In Bdellovibrio bacteriovorus (strain ATCC 15356 / DSM 50701 / NCIMB 9529 / HD100), this protein is Transcription antitermination protein NusB.